The chain runs to 264 residues: NADH dehydrogenase [ubiquinone] iron-sulfur protein 3, mitochondrial (264 aa).

A mitochondrion-targeting transit peptide spans 1–36 (MAAAAVARLWWRGILGASALTRGTGRPSVLLLPVRR).

This sequence belongs to the complex I 30 kDa subunit family. As to quaternary structure, core subunit of respiratory chain NADH dehydrogenase (Complex I) which is composed of 45 different subunits. Interacts with NDUFAF3. Interacts with RAB5IF. Found in subcomplexes containing subunits NDUFS2, MT-ND1 and NDUFA13.

The protein resides in the mitochondrion inner membrane. It catalyses the reaction a ubiquinone + NADH + 5 H(+)(in) = a ubiquinol + NAD(+) + 4 H(+)(out). Core subunit of the mitochondrial membrane respiratory chain NADH dehydrogenase (Complex I) which catalyzes electron transfer from NADH through the respiratory chain, using ubiquinone as an electron acceptor. Essential for the catalytic activity and assembly of complex I. The polypeptide is NADH dehydrogenase [ubiquinone] iron-sulfur protein 3, mitochondrial (NDUFS3) (Homo sapiens (Human)).